A 385-amino-acid polypeptide reads, in one-letter code: Putative transport protein MT1133 (385 aa).

Helical transmembrane passes span 7 to 27 (LTQK…GAYF), 32 to 52 (FVLI…FKWF), 66 to 86 (LLSA…LAIV), 159 to 179 (SLAG…ALLV), 218 to 238 (FVIA…AGFH), 241 to 261 (FFIF…GGIV), 263 to 283 (IPFG…FVLL), and 319 to 339 (GITM…ILIV).

It belongs to the autoinducer-2 exporter (AI-2E) (TC 2.A.86) family.

Its subcellular location is the cell membrane. This Mycobacterium tuberculosis (strain CDC 1551 / Oshkosh) protein is Putative transport protein MT1133.